Consider the following 312-residue polypeptide: Putative endonuclease 4 (312 aa).

His84, His127, Glu166, Asp202, His205, His239, Asp252, His254, and Glu284 together coordinate Zn(2+).

It belongs to the AP endonuclease 2 family. The cofactor is Zn(2+).

It catalyses the reaction Endonucleolytic cleavage to 5'-phosphooligonucleotide end-products.. Endonuclease IV plays a role in DNA repair. It cleaves phosphodiester bonds at apurinic or apyrimidinic sites (AP sites) to produce new 5'-ends that are base-free deoxyribose 5-phosphate residues. This is Putative endonuclease 4 from Acanthamoeba polyphaga (Amoeba).